The following is a 131-amino-acid chain: uncharacterized protein (131 aa).

The protein localises to the mitochondrion. This is an uncharacterized protein from Arabidopsis thaliana (Mouse-ear cress).